Consider the following 494-residue polypeptide: Autocrine proliferation repressor protein A (494 aa).

Positions M1–S18 are cleaved as a signal peptide. Residues N37, N153, and N302 are each glycosylated (N-linked (GlcNAc...) asparagine).

Belongs to the pqaA family. Interacts with cfaD.

It is found in the secreted. In terms of biological role, inhibitor that slows proliferation of secreting cells (also known as chalone). May function by binding to cell surface receptors. Requires cfaD for activity. Overexpression slows proliferation. The chain is Autocrine proliferation repressor protein A (aprA) from Dictyostelium discoideum (Social amoeba).